Consider the following 660-residue polypeptide: Ankyrin repeat domain-containing protein OPG023 (660 aa).

ANK repeat units follow at residues Phe-31–Lys-64, Asn-101–Val-131, Asn-135–Tyr-166, Tyr-190–Ser-222, Asn-226–Tyr-257, Arg-268–Ile-302, Asn-325–Lys-359, Arg-449–Ile-478, and Asn-482–Cys-512. A PRANC/F-box-like region spans residues Asn-578 to Glu-658.

This sequence belongs to the orthopoxvirus OPG023 family. In terms of assembly, interacts (via N-terminus) with host RELA. Interacts (via PRANC/F-box-like domain) with the SKP1 component of the host SCF ubiquitin ligase complex.

Substrate-specific adapter of SKP1-containing E3 ubiquitin-protein ligases which mediate the ubiquitination and subsequent proteasomal degradation of host target proteins. Prevents activation and subsequent nuclear localization of NF-kappa-B in infected cells, by targeting NF-kappa-B RELA subunit to the SCF E3 ligase complex. The protein is Ankyrin repeat domain-containing protein OPG023 (OPG023) of Cynomys gunnisoni (Gunnison's prairie dog).